A 463-amino-acid polypeptide reads, in one-letter code: Elongation factor 1-alpha (463 aa).

At glycine 2 the chain carries N,N,N-trimethylglycine. Position 3 is an N6,N6-dimethyllysine; alternate (lysine 3). An N6-methyllysine; alternate modification is found at lysine 3. The tr-type G domain occupies lysine 5 to threonine 239. The interval glycine 14–serine 21 is G1. Residue glycine 14 to serine 21 coordinates GTP. At lysine 30 the chain carries N6-methyllysine. The G2 stretch occupies residues glycine 70–aspartate 74. Lysine 79 bears the N6,N6,N6-trimethyllysine mark. Residues aspartate 91–glycine 94 form a G3 region. GTP-binding positions include aspartate 91–histidine 95 and asparagine 153–aspartate 156. Residues asparagine 153–aspartate 156 form a G4 region. Residues serine 191–tryptophan 193 form a G5 region. At lysine 315 the chain carries N6,N6-dimethyllysine; alternate. Lysine 315 carries the post-translational modification N6-methyllysine; alternate. Lysine 389 bears the N6-methyllysine mark.

Belongs to the TRAFAC class translation factor GTPase superfamily. Classic translation factor GTPase family. EF-Tu/EF-1A subfamily.

The protein resides in the cytoplasm. Functionally, this protein promotes the GTP-dependent binding of aminoacyl-tRNA to the A-site of ribosomes during protein biosynthesis. The sequence is that of Elongation factor 1-alpha (TEF) from Puccinia graminis (Black stem rust fungus).